The sequence spans 461 residues: PTS system sucrose-specific EIIBC component (461 aa).

In terms of domain architecture, PTS EIIB type-1 spans 4-87 (KETAKRLIEL…SKEADIEREE (84 aa)). The active-site Phosphocysteine intermediate; for EIIB activity is Cys-26. Residues 107-461 (KTLSNIFVPI…KINEDEERKK (355 aa)) enclose the PTS EIIC type-1 domain. 10 consecutive transmembrane segments (helical) span residues 112 to 132 (IFVPIIPAIVASGLLMGLLGM), 148 to 168 (LLDMFSSAAFIFLPILIGVSA), 178 to 198 (LGAVIGGIMIHPNLLNPWGLA), 208 to 228 (FGFDIALLGYQGTVIPVLLAV), 248 to 268 (LLVTPFVTVIVTGFVAFIAIG), 289 to 309 (AGFVAGLIFGGTYSLIVLTGV), 329 to 349 (LLPIWSMANVAQGGAGLAVFF), 359 to 379 (IALPAAFSAFLGITEPVIFGV), 387 to 407 (FIAAMIGGALGGAYVVFTHVA), and 430 to 450 (LIHYLIGMAIAAVSAFIAAFV).

It localises to the cell membrane. It catalyses the reaction N(pros)-phospho-L-histidyl-[protein](out) + sucrose = sucrose 6(G)-phosphate(in) + L-histidyl-[protein]. Functionally, the phosphoenolpyruvate-dependent sugar phosphotransferase system (sugar PTS), a major carbohydrate active transport system, catalyzes the phosphorylation of incoming sugar substrates concomitantly with their translocation across the cell membrane. This system is involved in sucrose transport. The polypeptide is PTS system sucrose-specific EIIBC component (sacP) (Bacillus subtilis (strain 168)).